The primary structure comprises 180 residues: Nascent polypeptide-associated complex subunit alpha (180 aa).

An NAC-A/B domain is found at 16–80; sequence SKNEKKAREL…AKVDDMNKRI (65 aa). The interval 81 to 113 is disordered; it reads AEAQQQQAQQDALSKAAGETGEAGEEDKSQDAI. Residues 82 to 100 show a composition bias toward low complexity; the sequence is EAQQQQAQQDALSKAAGET. The UBA domain maps to 142-179; the sequence is LDAKDIDIIVEQTQVSRAKAVKALRVHDGDMVNAIMEL.

This sequence belongs to the NAC-alpha family. As to quaternary structure, part of the nascent polypeptide-associated complex (NAC), consisting of EGD2 and EGD1. NAC associates with ribosomes via EGD1.

The protein resides in the cytoplasm. It is found in the nucleus. Its function is as follows. Component of the nascent polypeptide-associated complex (NAC), a dynamic component of the ribosomal exit tunnel, protecting the emerging polypeptides from interaction with other cytoplasmic proteins to ensure appropriate nascent protein targeting. The NAC complex also promotes mitochondrial protein import by enhancing productive ribosome interactions with the outer mitochondrial membrane and blocks the inappropriate interaction of ribosomes translating non-secretory nascent polypeptides with translocation sites in the membrane of the endoplasmic reticulum. EGD2 may also be involved in transcription regulation. In Debaryomyces hansenii (strain ATCC 36239 / CBS 767 / BCRC 21394 / JCM 1990 / NBRC 0083 / IGC 2968) (Yeast), this protein is Nascent polypeptide-associated complex subunit alpha (EGD2).